The chain runs to 237 residues: uncharacterized protein (237 aa).

The signal sequence occupies residues 1–28; that stretch reads MVFSFSTFNRLVTFTVMAAIVSVRPLTA.

This is an uncharacterized protein from Sinorhizobium fredii (strain NBRC 101917 / NGR234).